We begin with the raw amino-acid sequence, 578 residues long: MTNTLAGPDRSRDISQPLEKLGPDEAMKVRSDYLRGTINEGLLDAITGAVSGDDNAKLMKFHGVYVQDDRDLRDERRRQKLEPAYSFLIRLRLPGGVATAAQWLKLDELARAYGNSSLRVTTRQTFQFHWVLKNDLKATIQGLHEVLIDTIAACGDVVRGVMASVNPSLSSLHAEVYDDARRVSEHAMPNMRAYHEIWYGEERVATSEPEEPFLGKQYLPRKFKIGLVIPPYNDIDVYTQDLGFIAIAENGRLIGYNIVIGGGMGRTDQAPETYPRLGDVIGFIPKEQILAATDAVVGTQRDFGDRTVRAHARFKYTIDTHGLDFIQGEIERRLGYALEPARPFEFVSNGDAYGWAKGENGRYHYTLFIENGRIVNREDVALLDGLRAIAAVHQGSFRMTPNQNVVIADIPAKQKPKIAALLREYGLDHRNEQSLLRLNSMACVALPTCGLAMAESERYLPTLVTKIETILAEKGLEKEPITIRMTGCPNGCARPYVAEIALTGRAPGKYNLYFGGGFHGQRLNKMYLENVGEDAILQAVDAIAGHYAQDKNPGEHFGDFTIRAGYVKEVRAGREFND.

The tract at residues 1-21 (MTNTLAGPDRSRDISQPLEKL) is disordered. Positions 443, 449, 488, and 492 each coordinate [4Fe-4S] cluster. Siroheme is bound at residue Cys492.

This sequence belongs to the nitrite and sulfite reductase 4Fe-4S domain family. In terms of assembly, alpha(8)-beta(8). The alpha component is a flavoprotein, the beta component is a hemoprotein. The cofactor is siroheme. [4Fe-4S] cluster serves as cofactor.

The catalysed reaction is hydrogen sulfide + 3 NADP(+) + 3 H2O = sulfite + 3 NADPH + 4 H(+). It participates in sulfur metabolism; hydrogen sulfide biosynthesis; hydrogen sulfide from sulfite (NADPH route): step 1/1. In terms of biological role, component of the sulfite reductase complex that catalyzes the 6-electron reduction of sulfite to sulfide. This is one of several activities required for the biosynthesis of L-cysteine from sulfate. This chain is Sulfite reductase [NADPH] hemoprotein beta-component, found in Methylocella silvestris (strain DSM 15510 / CIP 108128 / LMG 27833 / NCIMB 13906 / BL2).